The primary structure comprises 145 residues: Deoxyuridine 5'-triphosphate nucleotidohydrolase (145 aa).

Substrate-binding positions include 62-64 (RSG), Asn75, 79-81 (TVD), and Lys89.

Belongs to the dUTPase family. It depends on Mg(2+) as a cofactor.

It carries out the reaction dUTP + H2O = dUMP + diphosphate + H(+). The protein operates within pyrimidine metabolism; dUMP biosynthesis; dUMP from dCTP (dUTP route): step 2/2. In terms of biological role, this enzyme is involved in nucleotide metabolism: it produces dUMP, the immediate precursor of thymidine nucleotides and it decreases the intracellular concentration of dUTP so that uracil cannot be incorporated into DNA. The polypeptide is Deoxyuridine 5'-triphosphate nucleotidohydrolase (Helicobacter pylori (strain ATCC 700392 / 26695) (Campylobacter pylori)).